A 631-amino-acid polypeptide reads, in one-letter code: Phosphomethylpyrimidine synthase (631 aa).

Residues Asn-239, Met-268, Tyr-297, His-333, 353 to 355, 394 to 397, and Glu-433 contribute to the substrate site; these read SRG and DGLR. Residue His-437 coordinates Zn(2+). Tyr-460 contacts substrate. His-501 is a binding site for Zn(2+). The [4Fe-4S] cluster site is built by Cys-581, Cys-584, and Cys-589.

Belongs to the ThiC family. As to quaternary structure, homodimer. [4Fe-4S] cluster is required as a cofactor.

It catalyses the reaction 5-amino-1-(5-phospho-beta-D-ribosyl)imidazole + S-adenosyl-L-methionine = 4-amino-2-methyl-5-(phosphooxymethyl)pyrimidine + CO + 5'-deoxyadenosine + formate + L-methionine + 3 H(+). It participates in cofactor biosynthesis; thiamine diphosphate biosynthesis. Catalyzes the synthesis of the hydroxymethylpyrimidine phosphate (HMP-P) moiety of thiamine from aminoimidazole ribotide (AIR) in a radical S-adenosyl-L-methionine (SAM)-dependent reaction. The protein is Phosphomethylpyrimidine synthase of Shigella boydii serotype 4 (strain Sb227).